A 550-amino-acid polypeptide reads, in one-letter code: Hydroxylamine reductase (550 aa).

Cys-5, Cys-8, Cys-17, and Cys-23 together coordinate [4Fe-4S] cluster. Residues His-250, Glu-274, Cys-319, Cys-405, Cys-433, Cys-458, Glu-492, and Lys-494 each contribute to the hybrid [4Fe-2O-2S] cluster site. Cysteine persulfide is present on Cys-405.

It belongs to the HCP family. Requires [4Fe-4S] cluster as cofactor. It depends on hybrid [4Fe-2O-2S] cluster as a cofactor.

The protein localises to the cytoplasm. It catalyses the reaction A + NH4(+) + H2O = hydroxylamine + AH2 + H(+). Functionally, catalyzes the reduction of hydroxylamine to form NH(3) and H(2)O. The protein is Hydroxylamine reductase of Geobacter sulfurreducens (strain ATCC 51573 / DSM 12127 / PCA).